Reading from the N-terminus, the 556-residue chain is Putative solute carrier family 22 member 31 (556 aa).

The Cytoplasmic segment spans residues 1-23 (MEQEARVLRAAGGFGRARRLLAS). The helical transmembrane segment at 24–44 (ASWVPCIVLGLVLSSEELLTA) threads the bilayer. The Extracellular portion of the chain corresponds to 45-128 (QPAPHCRPDP…WNLVCGDGWK (84 aa)). The chain crosses the membrane as a helical span at residues 129–149 (VPLEQVSHLLGWLLGCVILGA). At 150 to 157 (GCDRFGRR) the chain is on the cytoplasmic side. A helical membrane pass occupies residues 158 to 178 (AVFVASLVLTTGLGASEALAA). At 179–182 (SFPT) the chain is on the extracellular side. Residues 183–203 (LLVLRLLHGGTLAGALLALYL) form a helical membrane-spanning segment. Residues 204–218 (ARLELCDPPHRLAFS) are Cytoplasmic-facing. A helical transmembrane segment spans residues 219–239 (MGAGLFSVVGTLLLPGLAALV). At 240–246 (QDWRLLQ) the chain is on the extracellular side. Residues 247–267 (GLGALMSGLLLLFWGFPALFP) form a helical membrane-spanning segment. Residues 268-339 (ESPCWLLATG…LRTRVTWRNG (72 aa)) are Cytoplasmic-facing. Residues 340 to 357 (LILGFSSLVGGGIRASFR) form a helical membrane-spanning segment. Topologically, residues 358–366 (RSLAPQVPT) are extracellular. The helical transmembrane segment at 367–387 (FYLPYFLEAGLEAAALVFLLL) threads the bilayer. Residues 388-395 (TADCCGRR) lie on the Cytoplasmic side of the membrane. The helical transmembrane segment at 396 to 416 (PVLLLGTMVTGLASLLLLAGA) threads the bilayer. Residues 417-420 (QYLP) lie on the Extracellular side of the membrane. The chain crosses the membrane as a helical span at residues 421–441 (GWTVLFLSVLGLLASRAVSAL). Residues 442–448 (SSLFAAE) lie on the Cytoplasmic side of the membrane. A helical transmembrane segment spans residues 449–469 (VFPTVIRGAGLGLVLGAGFLG). Over 470–483 (QAAGPLDTLHGRQG) the chain is Extracellular. A helical membrane pass occupies residues 484–504 (FFLQQVVFASLAVLALLCVLL). The Cytoplasmic segment spans residues 505-556 (LPESRSRGLPQSLQDADRLRRSPLLRGRPRQDHLPLLPPSNSYWAGHTPEQH). The interval 524–556 (RRSPLLRGRPRQDHLPLLPPSNSYWAGHTPEQH) is disordered.

It belongs to the major facilitator (TC 2.A.1) superfamily. Organic cation transporter (TC 2.A.1.19) family.

It is found in the membrane. Functionally, organic anion transporter that mediates the uptake of ions. In Homo sapiens (Human), this protein is Putative solute carrier family 22 member 31.